Reading from the N-terminus, the 241-residue chain is MEIIPAIDIKDGRCVRLYQGDFAQMTVYADDPVAVARSWEAQGATRLHLVDLDGARAGHPQNVDAILAITQAVQIPVQLGGGLRREQDVESALALGVERVIIGTAAIAETDLVARLLDRFGEQIVIGIDARNGLVATDGWTVTSSVKATVLAEQMANLGARRIIYTDISRDGALSGPNFAALSELITPHGPAIIASGGIASIDHVRQLAQLGVEGAIIGKALYVGAVKLAEAMAVAHMTNV.

The active-site Proton acceptor is Asp-8. The Proton donor role is filled by Asp-129.

This sequence belongs to the HisA/HisF family.

It localises to the cytoplasm. It carries out the reaction 1-(5-phospho-beta-D-ribosyl)-5-[(5-phospho-beta-D-ribosylamino)methylideneamino]imidazole-4-carboxamide = 5-[(5-phospho-1-deoxy-D-ribulos-1-ylimino)methylamino]-1-(5-phospho-beta-D-ribosyl)imidazole-4-carboxamide. The protein operates within amino-acid biosynthesis; L-histidine biosynthesis; L-histidine from 5-phospho-alpha-D-ribose 1-diphosphate: step 4/9. The protein is 1-(5-phosphoribosyl)-5-[(5-phosphoribosylamino)methylideneamino] imidazole-4-carboxamide isomerase of Chloroflexus aurantiacus (strain ATCC 29364 / DSM 637 / Y-400-fl).